The sequence spans 229 residues: Large ribosomal subunit protein uL1 (229 aa).

It belongs to the universal ribosomal protein uL1 family. In terms of assembly, part of the 50S ribosomal subunit.

Its function is as follows. Binds directly to 23S rRNA. The L1 stalk is quite mobile in the ribosome, and is involved in E site tRNA release. Protein L1 is also a translational repressor protein, it controls the translation of the L11 operon by binding to its mRNA. This Streptococcus gordonii (strain Challis / ATCC 35105 / BCRC 15272 / CH1 / DL1 / V288) protein is Large ribosomal subunit protein uL1.